The primary structure comprises 264 residues: B3-hordein (264 aa).

Residues 1 to 15 (QQPVSRQPQQIIPQQ) are compositionally biased toward low complexity. The interval 1-66 (QQPVSRQPQQ…QQPFPQQPPF (66 aa)) is disordered. Composition is skewed to pro residues over residues 16–44 (PQQPFPLQPQQPQPFPQQPIPQQPQPYPQ) and 52–64 (QPFPSQQPFPQQP).

Belongs to the gliadin/glutenin family. Developing endosperm.

Sulfur-rich seed storage protein. The polypeptide is B3-hordein (Hordeum vulgare (Barley)).